The following is a 251-amino-acid chain: Demethylmenaquinone methyltransferase (251 aa).

S-adenosyl-L-methionine-binding positions include Thr66, Asp87, and 115–116 (NA).

The protein belongs to the class I-like SAM-binding methyltransferase superfamily. MenG/UbiE family.

It catalyses the reaction a 2-demethylmenaquinol + S-adenosyl-L-methionine = a menaquinol + S-adenosyl-L-homocysteine + H(+). Its pathway is quinol/quinone metabolism; menaquinone biosynthesis; menaquinol from 1,4-dihydroxy-2-naphthoate: step 2/2. Its function is as follows. Methyltransferase required for the conversion of demethylmenaquinol (DMKH2) to menaquinol (MKH2). This is Demethylmenaquinone methyltransferase from Symbiobacterium thermophilum (strain DSM 24528 / JCM 14929 / IAM 14863 / T).